Consider the following 262-residue polypeptide: Cerebellar degeneration-related antigen 1 (262 aa).

A run of 34 repeats spans residues 3 to 8 (WLEDVD), 9 to 14 (FLEDVP), 15 to 20 (LLEDIP), 21 to 26 (LLEDVP), 27 to 32 (LLEDVP), 33 to 38 (LLEDTS), 39 to 44 (RLEDIN), 45 to 50 (LMEDMA), 51 to 56 (LLEDVD), 57 to 62 (LLEDTD), 63 to 68 (FLEDLD), 69 to 74 (FSEAMD), 75 to 80 (LREDKD), 81 to 86 (FLEDMD), 87 to 92 (SLEDMA), 93 to 98 (LLEDVD), 99 to 104 (LLEDTD), 105 to 110 (FLEDPD), 111 to 116 (FLEAID), 117 to 122 (LREDKD), 123 to 128 (FLEDMD), 129 to 134 (SLEDLE), 135 to 140 (AIGRCG), 141 to 146 (FSGRHG), 147 to 152 (FFGRRR), 153 to 158 (FSGRPK), 159 to 164 (LSGRLG), 165 to 170 (LLGRRG), 171 to 176 (FSGRLG), 177 to 182 (GYWKTW), 183 to 188 (IFWKTW), 189 to 194 (IFWKTW), 195 to 200 (IFRKTY), and 201 to 206 (IGWKTW). A 23 X 6 AA approximate repeats region spans residues 3–140 (WLEDVDFLED…EDLEAIGRCG (138 aa)). The segment at 141–176 (FSGRHGFFGRRRFSGRPKLSGRLGLLGRRGFSGRLG) is 6 X 6 AA approximate repeats. Positions 177-206 (GYWKTWIFWKTWIFWKTWIFRKTYIGWKTW) are 5 X 6 AA approximate repeats.

Brain; predominantly expressed in normal neuroectodermal tissues and in certain malignant tumors.

This is Cerebellar degeneration-related antigen 1 (CDR1) from Homo sapiens (Human).